The primary structure comprises 499 residues: Centrosomal protein of 57 kDa (499 aa).

Over residues methionine 1–serine 16 the composition is skewed to low complexity. Positions methionine 1–proline 41 are disordered. Residues serine 22–proline 35 show a composition bias toward polar residues. Residue serine 53 is modified to Phosphoserine. A centrosome localization domain (CLD) region spans residues threonine 58–glutamate 239. Positions glutamate 63–arginine 242 form a coiled coil. Disordered regions lie at residues threonine 255–asparagine 275 and leucine 424–asparagine 476. Positions glycine 278–leucine 490 are mediates interaction with microtubules. Residues proline 388–glutamine 491 are a coiled coil. Positions glutamine 427–aspartate 443 are enriched in basic and acidic residues. A compositionally biased stretch (low complexity) spans serine 448 to threonine 458. Basic and acidic residues predominate over residues serine 460–arginine 474.

This sequence belongs to the translokin family. In terms of assembly, homodimer and homooligomer. Interacts with FGF2 and RAP80. Does not interact with FGF1 or FGF2 isoform 24 kDa. Interacts with microtubules. In terms of tissue distribution, ubiquitous (at protein level).

The protein localises to the nucleus. Its subcellular location is the cytoplasm. It localises to the cytoskeleton. It is found in the microtubule organizing center. The protein resides in the centrosome. In terms of biological role, centrosomal protein which may be required for microtubule attachment to centrosomes. May act by forming ring-like structures around microtubules. Mediates nuclear translocation and mitogenic activity of the internalized growth factor FGF2. The polypeptide is Centrosomal protein of 57 kDa (Cep57) (Rattus norvegicus (Rat)).